We begin with the raw amino-acid sequence, 221 residues long: GTP-binding nuclear protein Ran-3 (221 aa).

Positions 10-174 constitute a Small GTPase Ran-type domain; the sequence is DYPSFKLVIV…LYLARKLAGD (165 aa). 21 to 28 lines the GTP pocket; it reads DGGTGKTT. The switch-I stretch occupies residues 40 to 48; sequence KKYEPTIGV. GTP contacts are provided by residues glycine 71, 125-128, and 153-155; these read NKVD and SAK. The switch-II stretch occupies residues 71–87; it reads GQEKFGGLRDGYYIHGQ. Residues 201–221 form a disordered region; the sequence is EAELAAAASQPLPDDDDDTFE.

The protein belongs to the small GTPase superfamily. Ran family. In terms of assembly, found in a nuclear export complex with RanGTP, exportin and pre-miRNA. Interacts with RanBP1a and RanBP1b. Interacts with KPNB1.

The protein resides in the nucleus. Its function is as follows. GTP-binding protein involved in nucleocytoplasmic transport. Required for the import of protein into the nucleus and also for RNA export. Involved in chromatin condensation and control of cell cycle. This Arabidopsis thaliana (Mouse-ear cress) protein is GTP-binding nuclear protein Ran-3 (RAN3).